We begin with the raw amino-acid sequence, 89 residues long: Small ribosomal subunit protein uS15 (89 aa).

The protein belongs to the universal ribosomal protein uS15 family. Part of the 30S ribosomal subunit. Forms a bridge to the 50S subunit in the 70S ribosome, contacting the 23S rRNA.

One of the primary rRNA binding proteins, it binds directly to 16S rRNA where it helps nucleate assembly of the platform of the 30S subunit by binding and bridging several RNA helices of the 16S rRNA. In terms of biological role, forms an intersubunit bridge (bridge B4) with the 23S rRNA of the 50S subunit in the ribosome. This Desulforudis audaxviator (strain MP104C) protein is Small ribosomal subunit protein uS15.